The primary structure comprises 421 residues: Protein OS-9 homolog (421 aa).

An N-terminal signal peptide occupies residues 1 to 26 (MWRWSTGVRTMLGYAMCFLALGSALT). One can recognise an MRH domain in the interval 99–220 (EEATVGKKLE…LVSIPSLCEL (122 aa)). A mannooligosaccharide derivative is bound at residue Trp-115. The N-linked (GlcNAc...) asparagine glycan is linked to Asn-125. Disulfide bonds link Cys-173–Cys-206 and Cys-188–Cys-218. A mannooligosaccharide derivative-binding residues include Arg-180, Glu-202, and Tyr-208. Asn-271 and Asn-332 each carry an N-linked (GlcNAc...) asparagine glycan. Acidic residues predominate over residues 375–394 (GNSEDYEQQAPEQLDEEEAE). Positions 375-403 (GNSEDYEQQAPEQLDEEEAELTSQSDDPA) are disordered.

This sequence belongs to the OS-9 family. Interacts with missfolded ER lumenal proteins.

Its subcellular location is the endoplasmic reticulum membrane. Lectin involved in the quality control of the secretory pathway. As a member of the endoplasmic reticulum-associated degradation lumenal (ERAD-L) surveillance system, targets misfolded endoplasmic reticulum lumenal glycoproteins for degradation. This is Protein OS-9 homolog (YOS9) from Eremothecium gossypii (strain ATCC 10895 / CBS 109.51 / FGSC 9923 / NRRL Y-1056) (Yeast).